The chain runs to 178 residues: Translation initiation factor IF-3 (178 aa).

The protein belongs to the IF-3 family. As to quaternary structure, monomer.

Its subcellular location is the cytoplasm. Its function is as follows. IF-3 binds to the 30S ribosomal subunit and shifts the equilibrium between 70S ribosomes and their 50S and 30S subunits in favor of the free subunits, thus enhancing the availability of 30S subunits on which protein synthesis initiation begins. The protein is Translation initiation factor IF-3 of Picosynechococcus sp. (strain ATCC 27264 / PCC 7002 / PR-6) (Agmenellum quadruplicatum).